Consider the following 181-residue polypeptide: Large ribosomal subunit protein eL18 (181 aa).

The interval 152-181 is disordered; it reads WGKAPGQRGSHSAPYVRSEGRKFERAHGLK. The span at 169 to 181 shows a compositional bias: basic and acidic residues; the sequence is SEGRKFERAHGLK.

This sequence belongs to the eukaryotic ribosomal protein eL18 family.

It localises to the cytoplasm. This is Large ribosomal subunit protein eL18 (RPL18) from Tetrahymena thermophila.